Here is a 41-residue protein sequence, read N- to C-terminus: Pi-stichotoxin-Hmg5c (41 aa).

Intrachain disulfides connect Cys-4-Cys-37, Cys-6-Cys-30, and Cys-20-Cys-38.

It belongs to the sea anemone type 3 (BDS) potassium channel toxin family.

It is found in the secreted. It localises to the nematocyst. Its function is as follows. Toxin with different activities on acid-sensing ion channels (ASIC) and nicotinic acetylcholine receptors. Is able to bind T.californica muscle-type nicotinic acetylcholine receptors (nAChR) (alpha-1-beta-1-delta-epsilon (CHRNA1-CHRNB1-CHRND-CHRNE)), and human alpha-7/CHRNA7 nicotinic acetylcholine receptors. Weakly and reversibly inhibits rat homomeric ASIC1 (isoform ASIC1a) (IC(50)=1.25 uM), while it potentiates rat homomeric ASIC3 (EC(50)=1.53 uM). Rat ASIC1a current inhibition is not complete, and reaches a maximum of 86% inhibition. On rat ASIC3, does not activate the channel itself, but produces a remarkable potentiation of the transient current resulting from the acidic pulse. At the maximal applied concentration, elicits responses that are twice as high as those produced by extracellular protons. Surprisingly, shows a different activity on human ASIC3. On the truncated human ASIC3 (ASIC3-D20), the toxin weakly inhibits the channel. Molecular modeling interaction with rat ASIC1a suggests that it hinders the collapse of acidic pockets and stabilizes nonconducting channels state. In vivo, causes an anxiolytic effect on mouse behavior. Also shows an analgesic activity in an acid-induced muscle pain model, and important anti-inflammatory effect in models of acute local inflammation. The protein is Pi-stichotoxin-Hmg5c of Heteractis magnifica (Magnificent sea anemone).